The following is a 173-amino-acid chain: Alkyl hydroperoxide reductase AhpD (173 aa).

Residue Cys-131 is the Proton donor of the active site. Cys-131 and Cys-134 are oxidised to a cystine. Catalysis depends on Cys-134, which acts as the Cysteine sulfenic acid (-SOH) intermediate.

Belongs to the AhpD family.

The enzyme catalyses N(6)-[(R)-dihydrolipoyl]-L-lysyl-[lipoyl-carrier protein] + a hydroperoxide = N(6)-[(R)-lipoyl]-L-lysyl-[lipoyl-carrier protein] + an alcohol + H2O. Antioxidant protein with alkyl hydroperoxidase activity. Required for the reduction of the AhpC active site cysteine residues and for the regeneration of the AhpC enzyme activity. This is Alkyl hydroperoxide reductase AhpD from Rhizorhabdus wittichii (strain DSM 6014 / CCUG 31198 / JCM 15750 / NBRC 105917 / EY 4224 / RW1) (Sphingomonas wittichii).